The following is a 366-amino-acid chain: Aminomethyltransferase (366 aa).

Belongs to the GcvT family. In terms of assembly, the glycine cleavage system is composed of four proteins: P, T, L and H.

It carries out the reaction N(6)-[(R)-S(8)-aminomethyldihydrolipoyl]-L-lysyl-[protein] + (6S)-5,6,7,8-tetrahydrofolate = N(6)-[(R)-dihydrolipoyl]-L-lysyl-[protein] + (6R)-5,10-methylene-5,6,7,8-tetrahydrofolate + NH4(+). Functionally, the glycine cleavage system catalyzes the degradation of glycine. In Moorella thermoacetica (strain ATCC 39073 / JCM 9320), this protein is Aminomethyltransferase.